We begin with the raw amino-acid sequence, 310 residues long: GMP synthase [glutamine-hydrolyzing] subunit B (310 aa).

The GMPS ATP-PPase domain maps to 2 to 185 (FDAKSFIEES…LGLPEKIAHR (184 aa)). Residue 29-35 (SGGVDSS) participates in ATP binding.

Heterodimer composed of a glutamine amidotransferase subunit (A) and a GMP-binding subunit (B).

The enzyme catalyses XMP + L-glutamine + ATP + H2O = GMP + L-glutamate + AMP + diphosphate + 2 H(+). Its pathway is purine metabolism; GMP biosynthesis; GMP from XMP (L-Gln route): step 1/1. In terms of biological role, catalyzes the synthesis of GMP from XMP. This Methanococcus vannielii (strain ATCC 35089 / DSM 1224 / JCM 13029 / OCM 148 / SB) protein is GMP synthase [glutamine-hydrolyzing] subunit B.